Consider the following 121-residue polypeptide: Large ribosomal subunit protein uL14 (121 aa).

The protein belongs to the universal ribosomal protein uL14 family. In terms of assembly, part of the 50S ribosomal subunit. Forms a cluster with proteins L3 and L19. In the 70S ribosome, L14 and L19 interact and together make contacts with the 16S rRNA in bridges B5 and B8.

Functionally, binds to 23S rRNA. Forms part of two intersubunit bridges in the 70S ribosome. The protein is Large ribosomal subunit protein uL14 of Synechococcus sp. (strain WH7803).